Here is a 122-residue protein sequence, read N- to C-terminus: Large ribosomal subunit protein uL14c (122 aa).

It belongs to the universal ribosomal protein uL14 family. In terms of assembly, part of the 50S ribosomal subunit.

The protein localises to the plastid. The protein resides in the chloroplast. Functionally, binds to 23S rRNA. The polypeptide is Large ribosomal subunit protein uL14c (Pyropia yezoensis (Susabi-nori)).